The chain runs to 136 residues: Small ribosomal subunit protein uS8 (136 aa).

The protein belongs to the universal ribosomal protein uS8 family. Part of the 30S ribosomal subunit. Contacts proteins S5 and S12.

In terms of biological role, one of the primary rRNA binding proteins, it binds directly to 16S rRNA central domain where it helps coordinate assembly of the platform of the 30S subunit. The protein is Small ribosomal subunit protein uS8 of Persephonella marina (strain DSM 14350 / EX-H1).